Here is a 353-residue protein sequence, read N- to C-terminus: Melatonin receptor type 1A (353 aa).

The span at 1–15 (MKGNGSTLLNASQQA) shows a compositional bias: polar residues. A disordered region spans residues 1–23 (MKGNGSTLLNASQQAPGVGEGGG). The Extracellular portion of the chain corresponds to 1 to 32 (MKGNGSTLLNASQQAPGVGEGGGPRPSWLAST). N-linked (GlcNAc...) asparagine glycosylation is found at Asn4 and Asn10. The chain crosses the membrane as a helical span at residues 33 to 53 (LAFILIFTIVVDILGNLLVIL). At 54–66 (SVYRNKKLRNAGN) the chain is on the cytoplasmic side. A helical membrane pass occupies residues 67–87 (IFVVSLAIADLVVAIYPYPLV). Residues 88–105 (LTSIFNNGWNLGYLHCQI) lie on the Extracellular side of the membrane. The cysteines at positions 103 and 180 are disulfide-linked. A helical transmembrane segment spans residues 106-126 (SAFLMGLSVIGSIFNITGIAI). Residues 127-147 (NRYCYICHSLKYDRLYSNKNS) are Cytoplasmic-facing. A helical membrane pass occupies residues 148–168 (LCYVFLIWVLTLVAIMPNLQT). Topologically, residues 169 to 190 (GTLQYDPRIYSCTFTQSVSSAY) are extracellular. A helical membrane pass occupies residues 191 to 211 (TIAVVVFHFIVPMIIVIFCYL). Topologically, residues 212 to 243 (RIWILVLQVRRRVKPDSKPRLKPQDFRNFVTM) are cytoplasmic. Residues 244–264 (FVVFVLFAICWAPLNFIGLIV) traverse the membrane as a helical segment. Over 265 to 277 (ASDPATMAPRIPE) the chain is Extracellular. Residues 278-298 (WLFVASYYMAYFNSCLNAIIY) form a helical membrane-spanning segment. Residues 299 to 353 (GLLNQNFRQEYKRILVSLFTAKMCFVDSSNDPADKIKCKPAPLIANNNLIKVDSV) are Cytoplasmic-facing.

Belongs to the G-protein coupled receptor 1 family. As to expression, at least in the brain, more precisely in the pars tuberalis and the suprachiasmatic nucleus.

The protein resides in the cell membrane. Functionally, high affinity receptor for melatonin. Likely to mediate the reproductive and circadian actions of melatonin. The activity of this receptor is mediated by pertussis toxin sensitive G proteins that inhibit adenylate cyclase activity. Possibly involved in sleep induction, by melatonin activation of the potassium channel KCNMA1/BK and the dissociation of G-beta and G-gamma subunits, thereby decreasing synaptic transmission. The sequence is that of Melatonin receptor type 1A (MTNR1A) from Phodopus sungorus (Striped hairy-footed hamster).